Consider the following 337-residue polypeptide: MDLDQIVADAQQSFEQAADITTLENEKARFLGKSGALTELLKGLGKLDPEARKTEGARINVAKQQVEAALTARRQALADALLNQRLAAEAIDVTLPGRGAGAGSLHPVMRTWERVEQIFRSIGFDVADGPEIETDWYNFTSLNSPENHPARSMQDTFYVEGKDADGRQLLLRTHTSPMQVRYARMNRPPIKVIAPGRTYRVDSDATHSPMFNQVEGLWIDENISFADLKGVYTDFLKKFFERDDILVRFRPSYFPFTEPSAEIDMMFEHGKNAGKWLEISGSGQVHPTVIRNMGLDPERYIGFAFGSGLERLTMLRYGVQDLRLFFENDLRFLRQFA.

Glu258 provides a ligand contact to Mg(2+).

It belongs to the class-II aminoacyl-tRNA synthetase family. Phe-tRNA synthetase alpha subunit type 1 subfamily. As to quaternary structure, tetramer of two alpha and two beta subunits. The cofactor is Mg(2+).

The protein localises to the cytoplasm. It catalyses the reaction tRNA(Phe) + L-phenylalanine + ATP = L-phenylalanyl-tRNA(Phe) + AMP + diphosphate + H(+). This Burkholderia vietnamiensis (strain G4 / LMG 22486) (Burkholderia cepacia (strain R1808)) protein is Phenylalanine--tRNA ligase alpha subunit.